Consider the following 503-residue polypeptide: ATP synthase subunit beta (503 aa).

An ATP-binding site is contributed by 157-164; that stretch reads GGAGVGKT.

The protein belongs to the ATPase alpha/beta chains family. As to quaternary structure, F-type ATPases have 2 components, CF(1) - the catalytic core - and CF(0) - the membrane proton channel. CF(1) has five subunits: alpha(3), beta(3), gamma(1), delta(1), epsilon(1). CF(0) has three main subunits: a(1), b(2) and c(9-12). The alpha and beta chains form an alternating ring which encloses part of the gamma chain. CF(1) is attached to CF(0) by a central stalk formed by the gamma and epsilon chains, while a peripheral stalk is formed by the delta and b chains.

Its subcellular location is the cell membrane. The catalysed reaction is ATP + H2O + 4 H(+)(in) = ADP + phosphate + 5 H(+)(out). Its function is as follows. Produces ATP from ADP in the presence of a proton gradient across the membrane. The catalytic sites are hosted primarily by the beta subunits. The polypeptide is ATP synthase subunit beta (Christiangramia forsetii (strain DSM 17595 / CGMCC 1.15422 / KT0803) (Gramella forsetii)).